The primary structure comprises 211 residues: MKKKIIFLRNLGIEHWLTTFNKMNNFIISRNPCTYDEIWFVEHYPIFTQGQSNEQKNLIVSNDIPVVQTNRGGQITYHGPGQQILYFLIDLKRRKMNIRQLINIMEQTVIETLNNFSIQAYTKKKMPGVYINEKKICSLGLRIKKGFTLHGLALNVNMNLTPFNYIHPCGDKNMKMTQIKDFNSNVKLKDVRFILIKELSKFLEIFIINSN.

Positions 32-207 constitute a BPL/LPL catalytic domain; the sequence is PCTYDEIWFV…ELSKFLEIFI (176 aa). Residues 71-78, 138-140, and 151-153 each bind substrate; these read RGGQITYH, SLG, and GLA. The active-site Acyl-thioester intermediate is cysteine 169.

The protein belongs to the LipB family.

The protein localises to the cytoplasm. The catalysed reaction is octanoyl-[ACP] + L-lysyl-[protein] = N(6)-octanoyl-L-lysyl-[protein] + holo-[ACP] + H(+). It participates in protein modification; protein lipoylation via endogenous pathway; protein N(6)-(lipoyl)lysine from octanoyl-[acyl-carrier-protein]: step 1/2. In terms of biological role, catalyzes the transfer of endogenously produced octanoic acid from octanoyl-acyl-carrier-protein onto the lipoyl domains of lipoate-dependent enzymes. Lipoyl-ACP can also act as a substrate although octanoyl-ACP is likely to be the physiological substrate. The protein is Octanoyltransferase of Buchnera aphidicola subsp. Acyrthosiphon pisum (strain APS) (Acyrthosiphon pisum symbiotic bacterium).